The chain runs to 363 residues: Protein disulfide-isomerase 1 (363 aa).

An N-terminal signal peptide occupies residues 1-20 (MKILLFVTLIALAFVALCSA). Thioredoxin domains follow at residues 21 to 132 (EGNV…NHAK) and 133 to 285 (TNVK…AAAE). Residues Cys-51, Cys-54, Cys-172, and Cys-175 each act as nucleophile in the active site. 2 disulfide bridges follow: Cys-51–Cys-54 and Cys-172–Cys-175.

The protein belongs to the protein disulfide isomerase family.

The protein resides in the endoplasmic reticulum lumen. The enzyme catalyses Catalyzes the rearrangement of -S-S- bonds in proteins.. Participates in the folding of proteins containing disulfide bonds, may be involved in glycosylation, prolyl hydroxylation and triglyceride transfer. This chain is Protein disulfide-isomerase 1 (pdi1), found in Dictyostelium discoideum (Social amoeba).